The sequence spans 188 residues: Ribosome maturation factor RimP (188 aa).

Belongs to the RimP family.

It localises to the cytoplasm. In terms of biological role, required for maturation of 30S ribosomal subunits. The polypeptide is Ribosome maturation factor RimP (Corynebacterium aurimucosum (strain ATCC 700975 / DSM 44827 / CIP 107346 / CN-1) (Corynebacterium nigricans)).